The sequence spans 209 residues: Thiamine-phosphate synthase (209 aa).

4-amino-2-methyl-5-(diphosphooxymethyl)pyrimidine contacts are provided by residues 40–44 and N72; that span reads QLREK. Residues D73 and D92 each coordinate Mg(2+). Residue S111 coordinates 4-amino-2-methyl-5-(diphosphooxymethyl)pyrimidine. 137-139 contributes to the 2-[(2R,5Z)-2-carboxy-4-methylthiazol-5(2H)-ylidene]ethyl phosphate binding site; the sequence is TNS. Position 140 (K140) interacts with 4-amino-2-methyl-5-(diphosphooxymethyl)pyrimidine. 2-[(2R,5Z)-2-carboxy-4-methylthiazol-5(2H)-ylidene]ethyl phosphate contacts are provided by residues G167 and 187–188; that span reads IS.

The protein belongs to the thiamine-phosphate synthase family. Mg(2+) is required as a cofactor.

It catalyses the reaction 2-[(2R,5Z)-2-carboxy-4-methylthiazol-5(2H)-ylidene]ethyl phosphate + 4-amino-2-methyl-5-(diphosphooxymethyl)pyrimidine + 2 H(+) = thiamine phosphate + CO2 + diphosphate. The catalysed reaction is 2-(2-carboxy-4-methylthiazol-5-yl)ethyl phosphate + 4-amino-2-methyl-5-(diphosphooxymethyl)pyrimidine + 2 H(+) = thiamine phosphate + CO2 + diphosphate. It carries out the reaction 4-methyl-5-(2-phosphooxyethyl)-thiazole + 4-amino-2-methyl-5-(diphosphooxymethyl)pyrimidine + H(+) = thiamine phosphate + diphosphate. It functions in the pathway cofactor biosynthesis; thiamine diphosphate biosynthesis; thiamine phosphate from 4-amino-2-methyl-5-diphosphomethylpyrimidine and 4-methyl-5-(2-phosphoethyl)-thiazole: step 1/1. Condenses 4-methyl-5-(beta-hydroxyethyl)thiazole monophosphate (THZ-P) and 2-methyl-4-amino-5-hydroxymethyl pyrimidine pyrophosphate (HMP-PP) to form thiamine monophosphate (TMP). This is Thiamine-phosphate synthase from Clostridium tetani (strain Massachusetts / E88).